The chain runs to 199 residues: Dephospho-CoA kinase (199 aa).

Residues 4-199 (VLGITGGIAT…KWLEEQIGKK (196 aa)) form the DPCK domain. Position 12-17 (12-17 (ATGKST)) interacts with ATP.

Belongs to the CoaE family.

The protein resides in the cytoplasm. It catalyses the reaction 3'-dephospho-CoA + ATP = ADP + CoA + H(+). The protein operates within cofactor biosynthesis; coenzyme A biosynthesis; CoA from (R)-pantothenate: step 5/5. Its function is as follows. Catalyzes the phosphorylation of the 3'-hydroxyl group of dephosphocoenzyme A to form coenzyme A. The chain is Dephospho-CoA kinase from Enterococcus faecalis (strain ATCC 700802 / V583).